The sequence spans 87 residues: HssA/B-like protein 56 (87 aa).

This sequence belongs to the hssA/B family.

The protein is HssA/B-like protein 56 (hssl56) of Dictyostelium discoideum (Social amoeba).